The following is a 138-amino-acid chain: Phosphoribosyl-AMP cyclohydrolase (138 aa).

Aspartate 85 is a Mg(2+) binding site. Residue cysteine 86 participates in Zn(2+) binding. Residues aspartate 87 and aspartate 89 each coordinate Mg(2+). Residues cysteine 102 and cysteine 109 each contribute to the Zn(2+) site.

Belongs to the PRA-CH family. As to quaternary structure, homodimer. Mg(2+) is required as a cofactor. It depends on Zn(2+) as a cofactor.

It localises to the cytoplasm. It catalyses the reaction 1-(5-phospho-beta-D-ribosyl)-5'-AMP + H2O = 1-(5-phospho-beta-D-ribosyl)-5-[(5-phospho-beta-D-ribosylamino)methylideneamino]imidazole-4-carboxamide. Its pathway is amino-acid biosynthesis; L-histidine biosynthesis; L-histidine from 5-phospho-alpha-D-ribose 1-diphosphate: step 3/9. Its function is as follows. Catalyzes the hydrolysis of the adenine ring of phosphoribosyl-AMP. The chain is Phosphoribosyl-AMP cyclohydrolase from Methanothermobacter thermautotrophicus (strain ATCC 29096 / DSM 1053 / JCM 10044 / NBRC 100330 / Delta H) (Methanobacterium thermoautotrophicum).